A 156-amino-acid polypeptide reads, in one-letter code: Arginine repressor (156 aa).

Belongs to the ArgR family.

The protein resides in the cytoplasm. It participates in amino-acid biosynthesis; L-arginine biosynthesis [regulation]. Its function is as follows. Regulates arginine biosynthesis genes. The sequence is that of Arginine repressor from Vibrio cholerae serotype O1 (strain ATCC 39315 / El Tor Inaba N16961).